We begin with the raw amino-acid sequence, 301 residues long: Protoheme IX farnesyltransferase (301 aa).

The next 9 helical transmembrane spans lie at 16–36, 41–61, 93–113, 114–134, 141–161, 172–192, 217–237, 238–258, and 273–293; these read VVAL…PGMP, IQSG…AAAI, VFAG…VNLI, TAVL…VYLK, IVIG…AVTG, SLLV…LAIF, QILL…ATGM, SGVF…WYAW, and FGYS…DHWL.

It belongs to the UbiA prenyltransferase family. Protoheme IX farnesyltransferase subfamily.

The protein resides in the cell inner membrane. It catalyses the reaction heme b + (2E,6E)-farnesyl diphosphate + H2O = Fe(II)-heme o + diphosphate. Its pathway is porphyrin-containing compound metabolism; heme O biosynthesis; heme O from protoheme: step 1/1. In terms of biological role, converts heme B (protoheme IX) to heme O by substitution of the vinyl group on carbon 2 of heme B porphyrin ring with a hydroxyethyl farnesyl side group. This chain is Protoheme IX farnesyltransferase, found in Xylella fastidiosa (strain Temecula1 / ATCC 700964).